Reading from the N-terminus, the 507-residue chain is GMP synthase [glutamine-hydrolyzing] (507 aa).

In terms of domain architecture, Glutamine amidotransferase type-1 spans 3–190 (KILVIDYGSQ…IQGICGLKGS (188 aa)). C77 functions as the Nucleophile in the catalytic mechanism. Residues H164 and E166 contribute to the active site. The GMPS ATP-PPase domain occupies 191–382 (WTLMDFVENK…LGLPREILYR (192 aa)). 218-224 (SGGVDSS) provides a ligand contact to ATP.

As to quaternary structure, homodimer.

The catalysed reaction is XMP + L-glutamine + ATP + H2O = GMP + L-glutamate + AMP + diphosphate + 2 H(+). The protein operates within purine metabolism; GMP biosynthesis; GMP from XMP (L-Gln route): step 1/1. Its function is as follows. Catalyzes the synthesis of GMP from XMP. The polypeptide is GMP synthase [glutamine-hydrolyzing] (Petrotoga mobilis (strain DSM 10674 / SJ95)).